The sequence spans 344 residues: Prickle-like protein 4 (344 aa).

Residues 1–81 (MSPQGPAVLS…ARLVLPKLEG (81 aa)) enclose the PET domain. 2 LIM zinc-binding domains span residues 82–147 (HTCE…LLRP) and 148–207 (RCPA…RYSD). A disordered region spans residues 253–344 (GSSLQTQRGL…NASKTHCTMC (92 aa)). Residues 257 to 271 (QTQRGLPGSSPQQEN) are compositionally biased toward polar residues. Residues 272-296 (RPGDKAEAPKGQEQCRLETIRDPKD) are compositionally biased toward basic and acidic residues. The span at 322-344 (SWKTPGSLQAEDSNASKTHCTMC) shows a compositional bias: polar residues.

It belongs to the prickle / espinas / testin family. As to expression, expressed in a broad range of normal tissues as well as in hepatocellular carcinoma, breast cancer and prostate cancer tissues.

The protein is Prickle-like protein 4 (PRICKLE4) of Homo sapiens (Human).